Consider the following 339-residue polypeptide: Anthranilate phosphoribosyltransferase (339 aa).

Residues Gly-80, 83–84, 90–93, 108–116, and Ser-120 each bind 5-phospho-alpha-D-ribose 1-diphosphate; these read GD, NVST, and KHGNRSVTS. Gly-80 lines the anthranilate pocket. Ser-92 is a Mg(2+) binding site. Asn-111 is an anthranilate binding site. Arg-166 lines the anthranilate pocket. Residues Asp-225 and Glu-226 each contribute to the Mg(2+) site.

The protein belongs to the anthranilate phosphoribosyltransferase family. In terms of assembly, homodimer. Mg(2+) serves as cofactor.

The enzyme catalyses N-(5-phospho-beta-D-ribosyl)anthranilate + diphosphate = 5-phospho-alpha-D-ribose 1-diphosphate + anthranilate. Its pathway is amino-acid biosynthesis; L-tryptophan biosynthesis; L-tryptophan from chorismate: step 2/5. Its function is as follows. Catalyzes the transfer of the phosphoribosyl group of 5-phosphorylribose-1-pyrophosphate (PRPP) to anthranilate to yield N-(5'-phosphoribosyl)-anthranilate (PRA). This is Anthranilate phosphoribosyltransferase from Ignicoccus hospitalis (strain KIN4/I / DSM 18386 / JCM 14125).